The primary structure comprises 1264 residues: Protein fantom (1264 aa).

Coiled coils occupy residues 64–143 (LKQH…LQVQ), 196–268 (YSNS…NVET), 299–454 (LRIS…ESDI), and 488–555 (NKDL…VHLL). C2 domains are found at residues 577 to 714 (KQYK…FCTT) and 773 to 897 (AATT…SGIF). Disordered stretches follow at residues 979–1018 (DTIS…YPSK) and 1047–1093 (QLAS…NTKQ). Over residues 1056–1080 (SEDETEITEELEPEDEDRSASDSDD) the composition is skewed to acidic residues.

It belongs to the RPGRIP1 family. As to quaternary structure, interacts with NPHP4 and NPHP1; NPHP1, NPHP4 and RPGRIP1L are proposed to form a functional NPHP1-4-8 module localized to cell-cell contacts and the ciliary transition zone; NPHP4 mediates the interaction between NPHP1 and RPGRIP1L. Interacts with IQCB1; the interaction likely requires additional interactors. Interacts with TBXA2R (via C-terminus), RPGR, NEK4. Interacts with NPHP4, INVS and DVL2; proposed to form a complex involved in DVL2 stabilization. Interacts with PSMD2. As to expression, ubiquitously expressed. Not found in heart and skin.

Its subcellular location is the cytoplasm. It localises to the cytoskeleton. The protein localises to the cilium basal body. It is found in the cilium axoneme. The protein resides in the microtubule organizing center. Its subcellular location is the centrosome. It localises to the cell junction. The protein localises to the tight junction. Negatively regulates signaling through the G-protein coupled thromboxane A2 receptor (TBXA2R). May be involved in mechanisms like programmed cell death, craniofacial development, patterning of the limbs, and formation of the left-right axis. Involved in the organization of apical junctions; the function is proposed to implicate a NPHP1-4-8 module. Does not seem to be strictly required for ciliogenesis. Involved in establishment of planar cell polarity such as in cochlear sensory epithelium and is proposed to implicate stabilization of disheveled proteins. Involved in regulation of proteasomal activity at the primary cilium probably implicating association with PSDM2. The protein is Protein fantom (Rpgrip1l) of Mus musculus (Mouse).